A 237-amino-acid chain; its full sequence is MKGILVAGITAVLVAAVESLSCVQCNSWEKSCVNSIASECPSHANTSCISSSASSSLETPVRLYQNMFCSAENCSEETHITAFTVHVSAEEHFHFVSQCCQGKECSNTSDALDPPLKNVSSNAECPACYESNGTSCHGKPWKCYEEEQCVFLVAELKNDIESKSLVLKGCSNVSNATCQFLSGENKTLGGVIFRKFECANVNSLTPTSAPTTSHNVGSKASLYLLALASLLLRGLLP.

The first 19 residues, methionine 1–serine 19, serve as a signal peptide directing secretion. N-linked (GlcNAc...) asparagine glycans are attached at residues asparagine 45, asparagine 73, asparagine 107, asparagine 118, asparagine 132, asparagine 172, asparagine 175, and asparagine 185. A UPAR/Ly6 domain is found at cysteine 125–alanine 176. The GPI-anchor amidated asparagine moiety is linked to residue asparagine 215. The propeptide at valine 216–proline 237 is removed in mature form.

It belongs to the CNF-like-inhibitor family. Post-translationally, highly N-glycosylated. Not O-glycosylated. GPI-anchored. The GPI-anchor is cleaved, leading to secretion into the colonic lumen. In terms of tissue distribution, expressed in the large intestine. Preferentially expressed on the epithelial layer exposed to the lumen (at protein level).

The protein localises to the cell membrane. It is found in the secreted. Secreted protein specifically required to prevent invasion of Gram-negative bacteria in the inner mucus layer of the colon epithelium, a portion of the large intestine which is free of commensal microbiota. Prevents invasion of flagellated microbiota by binding to the flagellum of bacteria, such as P.mirabilis, thereby inhibiting bacterial motility in the intestinal lumen. Segregation of intestinal bacteria and epithelial cells in the colon is required to preserve intestinal homeostasis. The sequence is that of Ly6/PLAUR domain-containing protein 8 from Homo sapiens (Human).